A 163-amino-acid polypeptide reads, in one-letter code: Phosphopantetheine adenylyltransferase (163 aa).

A substrate-binding site is contributed by T11. ATP is bound by residues 11 to 12 (TF) and H19. Substrate-binding residues include K43, L75, and R89. ATP is bound by residues 90 to 92 (GLR), E100, and 125 to 131 (YSFISST).

It belongs to the bacterial CoaD family. As to quaternary structure, homohexamer. The cofactor is Mg(2+).

It localises to the cytoplasm. The catalysed reaction is (R)-4'-phosphopantetheine + ATP + H(+) = 3'-dephospho-CoA + diphosphate. Its pathway is cofactor biosynthesis; coenzyme A biosynthesis; CoA from (R)-pantothenate: step 4/5. Its function is as follows. Reversibly transfers an adenylyl group from ATP to 4'-phosphopantetheine, yielding dephospho-CoA (dPCoA) and pyrophosphate. This Acinetobacter baumannii (strain SDF) protein is Phosphopantetheine adenylyltransferase.